The following is a 741-amino-acid chain: Condensin complex subunit 2 (741 aa).

Residues 1–67 (MGPPGPALPA…NDDEKERLQR (67 aa)) form a disordered region. Ser-15, Ser-25, and Ser-28 each carry phosphoserine. Thr-49 is modified (phosphothreonine). Residues Ser-70, Ser-78, Ser-81, Ser-87, Ser-89, Ser-92, Ser-96, Ser-201, and Ser-233 each carry the phosphoserine modification. Acidic residues predominate over residues 361-377 (CGDFPDGSLGDDFDAND). The disordered stretch occupies residues 361 to 383 (CGDFPDGSLGDDFDANDEPDHTA). Ser-432 is modified (phosphoserine). Residues 447-467 (FRPRRKQDAPSQSENKKKSTK) form a disordered region. A Glycyl lysine isopeptide (Lys-Gly) (interchain with G-Cter in SUMO2) cross-link involves residue Lys-488. Ser-496 bears the Phosphoserine mark. 2 positions are modified to phosphothreonine: Thr-598 and Thr-605. Residue Lys-637 is modified to N6-acetyllysine.

The protein belongs to the CND2 (condensin subunit 2) family. Component of the condensin complex, which contains the SMC2 and SMC4 heterodimer, and three non SMC subunits that probably regulate the complex: NCAPH/BRRN1, NCAPD2/CAPD2 and NCAPG. Phosphorylated by CDK1. Its phosphorylation, as well as that of NCAPD2 and NCAPG subunits, activates the condensin complex and is required for chromosome condensation. In terms of tissue distribution, widely expressed at low level. Expressed in proliferating cells.

The protein localises to the nucleus. Its subcellular location is the cytoplasm. The protein resides in the chromosome. Regulatory subunit of the condensin complex, a complex required for conversion of interphase chromatin into mitotic-like condense chromosomes. The condensin complex probably introduces positive supercoils into relaxed DNA in the presence of type I topoisomerases and converts nicked DNA into positive knotted forms in the presence of type II topoisomerases. Early in neurogenesis, may play an essential role to ensure accurate mitotic chromosome condensation in neuron stem cells, ultimately affecting neuron pool and cortex size. The chain is Condensin complex subunit 2 from Homo sapiens (Human).